The primary structure comprises 171 residues: Large ribosomal subunit protein bL9 (171 aa).

This sequence belongs to the bacterial ribosomal protein bL9 family.

Functionally, binds to the 23S rRNA. The chain is Large ribosomal subunit protein bL9 from Rickettsia rickettsii (strain Iowa).